We begin with the raw amino-acid sequence, 373 residues long: Chaperone protein DnaJ (373 aa).

Residues 4–69 enclose the J domain; sequence SYYEILEITQ…EKRAIYDRYG (66 aa). The segment at 135–212 adopts a CR-type zinc-finger fold; the sequence is GCKKNIDFTY…CKGLGYNESK (78 aa). The Zn(2+) site is built by Cys148, Cys151, Cys164, Cys167, Cys186, Cys189, Cys200, and Cys203. 4 CXXCXGXG motif repeats span residues 148 to 155, 164 to 171, 186 to 193, and 200 to 207; these read CKTCNGTG, CPKCQGRG, CPDCQGIG, and CSDCKGLG.

This sequence belongs to the DnaJ family. As to quaternary structure, homodimer. It depends on Zn(2+) as a cofactor.

Its subcellular location is the cytoplasm. In terms of biological role, participates actively in the response to hyperosmotic and heat shock by preventing the aggregation of stress-denatured proteins and by disaggregating proteins, also in an autonomous, DnaK-independent fashion. Unfolded proteins bind initially to DnaJ; upon interaction with the DnaJ-bound protein, DnaK hydrolyzes its bound ATP, resulting in the formation of a stable complex. GrpE releases ADP from DnaK; ATP binding to DnaK triggers the release of the substrate protein, thus completing the reaction cycle. Several rounds of ATP-dependent interactions between DnaJ, DnaK and GrpE are required for fully efficient folding. Also involved, together with DnaK and GrpE, in the DNA replication of plasmids through activation of initiation proteins. This chain is Chaperone protein DnaJ, found in Campylobacter jejuni (strain RM1221).